The following is a 420-amino-acid chain: rRNA methyltransferase 3, mitochondrial (420 aa).

Residues 1–40 constitute a mitochondrion transit peptide; the sequence is MAALVRPARFVVRPLLQVVQAWDLDARRWVRALRRSPVKV. Residues 49–88 are disordered; that stretch reads EQKRAPGKQPRKAPSEASAQEQREKQPLEESASRAPSTWE. Over residues 69–80 the composition is skewed to basic and acidic residues; it reads EQREKQPLEESA. Glycine 356, isoleucine 380, and leucine 389 together coordinate S-adenosyl-L-methionine.

This sequence belongs to the class IV-like SAM-binding methyltransferase superfamily. RNA methyltransferase TrmH family. As to expression, expressed at same level in normal liver and hepatocarcinoma.

Its subcellular location is the mitochondrion. It carries out the reaction guanosine(1370) in 16S rRNA + S-adenosyl-L-methionine = 2'-O-methylguanosine(1370) in 16S rRNA + S-adenosyl-L-homocysteine + H(+). S-adenosyl-L-methionine-dependent 2'-O-ribose methyltransferase that catalyzes the formation of 2'-O-methylguanosine at position 1370 (Gm1370) in the 16S mitochondrial large subunit ribosomal RNA (mtLSU rRNA), a conserved modification in the peptidyl transferase domain of the mtLSU rRNA. Also required for formation of 2'-O-methyluridine at position 1369 (Um1369) mediated by MRM2. This chain is rRNA methyltransferase 3, mitochondrial, found in Homo sapiens (Human).